The chain runs to 548 residues: Elongator complex protein 3 (548 aa).

In terms of domain architecture, Radical SAM core spans 83 to 373; sequence RTASGIAVVA…YRVQRDIPMP (291 aa). 3 residues coordinate [4Fe-4S] cluster: Cys-100, Cys-110, and Cys-113. Acetyl-CoA contacts are provided by residues Lys-165, 475-478, 498-500, and Tyr-531; these read ELHV and FGM. The 152-residue stretch at 397 to 548 folds into the N-acetyltransferase domain; sequence TECRDVRTRE…EGPYMVKNLY (152 aa).

It belongs to the ELP3 family. In terms of assembly, component of the elongator complex. Requires [4Fe-4S] cluster as cofactor.

Its subcellular location is the cytoplasm. It is found in the nucleus. The catalysed reaction is uridine(34) in tRNA + acetyl-CoA + S-adenosyl-L-methionine + H2O = 5-(carboxymethyl)uridine(34) in tRNA + 5'-deoxyadenosine + L-methionine + CoA + 2 H(+). It participates in tRNA modification; 5-methoxycarbonylmethyl-2-thiouridine-tRNA biosynthesis. Its function is as follows. Catalytic tRNA acetyltransferase subunit of the elongator complex which is required for multiple tRNA modifications, including mcm5U (5-methoxycarbonylmethyl uridine), mcm5s2U (5-methoxycarbonylmethyl-2-thiouridine), and ncm5U (5-carbamoylmethyl uridine). In the elongator complex, acts as a tRNA uridine(34) acetyltransferase by mediating formation of carboxymethyluridine in the wobble base at position 34 in tRNAs. Involved in neurogenesis. Involved in somite development. The sequence is that of Elongator complex protein 3 from Danio rerio (Zebrafish).